The following is a 224-amino-acid chain: Urease accessory protein UreF (224 aa).

The protein belongs to the UreF family. UreD, UreF and UreG form a complex that acts as a GTP-hydrolysis-dependent molecular chaperone, activating the urease apoprotein by helping to assemble the nickel containing metallocenter of UreC. The UreE protein probably delivers the nickel.

Its subcellular location is the cytoplasm. Required for maturation of urease via the functional incorporation of the urease nickel metallocenter. This Pseudomonas entomophila (strain L48) protein is Urease accessory protein UreF.